Here is a 384-residue protein sequence, read N- to C-terminus: Chaperone protein DnaJ (384 aa).

Positions 5–69 (DYYKVLGVDR…QKRAQYDQFG (65 aa)) constitute a J domain. Residues 141 to 223 (GKKTQVSYTR…CGGKGTVERK (83 aa)) form a CR-type zinc finger. Zn(2+) is bound by residues Cys154, Cys157, Cys171, Cys174, Cys197, Cys200, Cys211, and Cys214. CXXCXGXG motif repeat units lie at residues 154 to 161 (CETCGGNG), 171 to 178 (CDKCHGTG), 197 to 204 (CDKCNGRG), and 211 to 218 (CKTCGGKG).

The protein belongs to the DnaJ family. Homodimer. The cofactor is Zn(2+).

Its subcellular location is the cytoplasm. Its function is as follows. Participates actively in the response to hyperosmotic and heat shock by preventing the aggregation of stress-denatured proteins and by disaggregating proteins, also in an autonomous, DnaK-independent fashion. Unfolded proteins bind initially to DnaJ; upon interaction with the DnaJ-bound protein, DnaK hydrolyzes its bound ATP, resulting in the formation of a stable complex. GrpE releases ADP from DnaK; ATP binding to DnaK triggers the release of the substrate protein, thus completing the reaction cycle. Several rounds of ATP-dependent interactions between DnaJ, DnaK and GrpE are required for fully efficient folding. Also involved, together with DnaK and GrpE, in the DNA replication of plasmids through activation of initiation proteins. The polypeptide is Chaperone protein DnaJ (Lactobacillus acidophilus (strain ATCC 700396 / NCK56 / N2 / NCFM)).